We begin with the raw amino-acid sequence, 141 residues long: UPF0310 protein SSA_0254 (141 aa).

The protein belongs to the UPF0310 family.

This Streptococcus sanguinis (strain SK36) protein is UPF0310 protein SSA_0254.